The primary structure comprises 545 residues: MTHFIFVTGGVVSSLGKGISAASVAALLEARGLKVTMVKMDPYINVDPGTMSPFQHGEVFVTEDGAETDLDLGYYERFLRRAKMTKLNNFTSGRVYQDVLNKERRGDYLGGTVQVIPHITDNIKERVLAAGEGYDVAIVEIGGTVGDIESLPFMESVRQLMVELGHKRTMLMHLTLLPYIRSAAELKTKPTQHSVKELLSIGIQPDILICRTEHDVDADTKRKIALFTNVEARAVVVCKDAKTIYQIPRNFYEQKVDDLICERFGYNDLPQADLSDWDQVCEALFNPEYIVRVAMVGKYVELPDAYKSVNEALLHAGIQNRVKVQIDYVDAETLETQDISILSTADAILVPGGFGERGTEGKMLAIKYAREQGIPFLGICLGMQLAVIEYARNVAGLAEATSTEFNRSTKFPIIGLITEWLDERGELQQRSVESDLGGTMRLGAQKSELVEGTKTRQVYGKAEIVERHRHRYEMNDRFIEPIEKAGMKISGYSTAQHLVETVEIPEHPWFIAVQFHPEFTSSPRDGHPLFASFIDAAKKQHLKTK.

Residues M1–Y266 form an amidoligase domain region. Residue S13 coordinates CTP. S13 contacts UTP. Residues S14–I19 and D71 contribute to the ATP site. Mg(2+) is bound by residues D71 and E140. Residues D147 to E149, K187 to Q192, and K223 each bind CTP. Residues K187–Q192 and K223 contribute to the UTP site. K239–A241 is an ATP binding site. The Glutamine amidotransferase type-1 domain occupies R292–K543. L-glutamine is bound at residue G353. C380 (nucleophile; for glutamine hydrolysis) is an active-site residue. L-glutamine contacts are provided by residues L381–Q384, E404, and R471. Catalysis depends on residues H516 and E518.

This sequence belongs to the CTP synthase family. Homotetramer.

It carries out the reaction UTP + L-glutamine + ATP + H2O = CTP + L-glutamate + ADP + phosphate + 2 H(+). The enzyme catalyses L-glutamine + H2O = L-glutamate + NH4(+). It catalyses the reaction UTP + NH4(+) + ATP = CTP + ADP + phosphate + 2 H(+). It participates in pyrimidine metabolism; CTP biosynthesis via de novo pathway; CTP from UDP: step 2/2. With respect to regulation, allosterically activated by GTP, when glutamine is the substrate; GTP has no effect on the reaction when ammonia is the substrate. The allosteric effector GTP functions by stabilizing the protein conformation that binds the tetrahedral intermediate(s) formed during glutamine hydrolysis. Inhibited by the product CTP, via allosteric rather than competitive inhibition. In terms of biological role, catalyzes the ATP-dependent amination of UTP to CTP with either L-glutamine or ammonia as the source of nitrogen. Regulates intracellular CTP levels through interactions with the four ribonucleotide triphosphates. This Acinetobacter baylyi (strain ATCC 33305 / BD413 / ADP1) protein is CTP synthase.